Here is a 53-residue protein sequence, read N- to C-terminus: Rho GTPase-activating protein 6 (53 aa).

The protein localises to the cytoplasm. GTPase activator for the Rho-type GTPases by converting them to an inactive GDP-bound state. Could regulate the interactions of signaling molecules with the actin cytoskeleton. Promotes continuous elongation of cytoplasmic processes during cell motility and simultaneous retraction of the cell body changing the cell morphology. This chain is Rho GTPase-activating protein 6 (arhgap6), found in Takifugu rubripes (Japanese pufferfish).